The sequence spans 221 residues: Large ribosomal subunit protein bL25 (221 aa).

The interval 174–221 (SVVTVVPPTDEPTEEEVEAMEGEAATEEPEVVGEEKEEDSEEENKDEE) is disordered. Over residues 184-221 (EPTEEEVEAMEGEAATEEPEVVGEEKEEDSEEENKDEE) the composition is skewed to acidic residues.

It belongs to the bacterial ribosomal protein bL25 family. CTC subfamily. In terms of assembly, part of the 50S ribosomal subunit; part of the 5S rRNA/L5/L18/L25 subcomplex. Contacts the 5S rRNA. Binds to the 5S rRNA independently of L5 and L18.

Its function is as follows. This is one of the proteins that binds to the 5S RNA in the ribosome where it forms part of the central protuberance. The protein is Large ribosomal subunit protein bL25 of Staphylococcus haemolyticus (strain JCSC1435).